The sequence spans 452 residues: Digeranylgeranylglycerophospholipid reductase (452 aa).

FAD contacts are provided by residues 15 to 16, 35 to 36, and 45 to 50; these read FA, DS, and KPCGDA. Residue His-55 coordinates a 2,3-bis-O-phytanyl-sn-glycerol 1-phospholipid. Positions 122 and 288 each coordinate FAD. His-297 is an a 2,3-bis-O-phytanyl-sn-glycerol 1-phospholipid binding site. 300 to 301 contributes to the FAD binding site; sequence GK. The cysteines at positions 310 and 335 are disulfide-linked. Tyr-340 provides a ligand contact to a 2,3-bis-O-phytanyl-sn-glycerol 1-phospholipid.

This sequence belongs to the geranylgeranyl reductase family. Monomer. FAD is required as a cofactor.

It catalyses the reaction a 2,3-bis-O-phytanyl-sn-glycerol 1-phospholipid + 8 A = a 2,3-bis-O-(geranylgeranyl)-sn-glycerol 1-phospholipid + 8 AH2. It carries out the reaction 2,3-bis-O-(phytanyl)-sn-glycerol 1-phosphate + 8 A = 2,3-bis-O-(geranylgeranyl)-sn-glycerol 1-phosphate + 8 AH2. The enzyme catalyses sn-3-O-phytanylglycerol 1-phosphate + 4 A = sn-3-O-(geranylgeranyl)glycerol 1-phosphate + 4 AH2. The catalysed reaction is phytyl diphosphate + 3 A = (2E,6E,10E)-geranylgeranyl diphosphate + 3 AH2. Its pathway is membrane lipid metabolism; glycerophospholipid metabolism. Functionally, is involved in the reduction of 2,3-digeranylgeranylglycerophospholipids (unsaturated archaeols) into 2,3-diphytanylglycerophospholipids (saturated archaeols) in the biosynthesis of archaeal membrane lipids. Catalyzes the formation of archaetidic acid (2,3-di-O-phytanyl-sn-glyceryl phosphate) from 2,3-di-O-geranylgeranylglyceryl phosphate (DGGGP) via the hydrogenation of each double bond of the isoprenoid chains. Is not active with NADPH or NADH as an electron donor; the physiological reducing agent is unknown. Is also active on the more upstream precursors of membrane lipid biosynthesis, catalyzing the complete reduction of 3-O-geranylgeranylglyceryl phosphate (GGGP) to 3-O-phytanylglyceryl phosphate, and the partial reduction of geranylgeranyl diphosphate (GGPP) to phytyl diphosphate, thus reducing three of four GGPP double bonds and preserving the allylic double bond (at position 2). This reaction product is a reactive prenyl donor, which can be used as a substrate by archaeal prenyltransferases such as GGGP synthases. This chain is Digeranylgeranylglycerophospholipid reductase, found in Sulfolobus acidocaldarius (strain ATCC 33909 / DSM 639 / JCM 8929 / NBRC 15157 / NCIMB 11770).